Reading from the N-terminus, the 166-residue chain is Protein SprT (166 aa).

The 145-residue stretch at 20–164 (EHLANANRKL…CVRCGDLLVA (145 aa)) folds into the SprT-like domain. A Zn(2+)-binding site is contributed by histidine 78. The active site involves glutamate 79. Histidine 82 lines the Zn(2+) pocket.

It belongs to the SprT family. The cofactor is Zn(2+).

It is found in the cytoplasm. The polypeptide is Protein SprT (Klebsiella pneumoniae subsp. pneumoniae (strain ATCC 700721 / MGH 78578)).